A 195-amino-acid polypeptide reads, in one-letter code: Recombination protein RecR (195 aa).

The C4-type zinc finger occupies 53–68 (CPVCFNIDVKSPCSIC). In terms of domain architecture, Toprim spans 76–171 (QLLCIVEELG…KVTRLACGIP (96 aa)).

This sequence belongs to the RecR family.

May play a role in DNA repair. It seems to be involved in an RecBC-independent recombinational process of DNA repair. It may act with RecF and RecO. The chain is Recombination protein RecR from Ehrlichia chaffeensis (strain ATCC CRL-10679 / Arkansas).